The following is a 492-amino-acid chain: N-succinylglutamate 5-semialdehyde dehydrogenase (492 aa).

An NAD(+)-binding site is contributed by 220 to 225 (GSAGTG). Catalysis depends on residues Glu-243 and Cys-277.

Belongs to the aldehyde dehydrogenase family. AstD subfamily.

The catalysed reaction is N-succinyl-L-glutamate 5-semialdehyde + NAD(+) + H2O = N-succinyl-L-glutamate + NADH + 2 H(+). The protein operates within amino-acid degradation; L-arginine degradation via AST pathway; L-glutamate and succinate from L-arginine: step 4/5. Catalyzes the NAD-dependent reduction of succinylglutamate semialdehyde into succinylglutamate. The protein is N-succinylglutamate 5-semialdehyde dehydrogenase of Cronobacter sakazakii (strain ATCC BAA-894) (Enterobacter sakazakii).